Here is an 879-residue protein sequence, read N- to C-terminus: Alanine--tRNA ligase (879 aa).

Residues histidine 567, histidine 571, cysteine 669, and histidine 673 each coordinate Zn(2+).

It belongs to the class-II aminoacyl-tRNA synthetase family. Zn(2+) serves as cofactor.

Its subcellular location is the cytoplasm. It carries out the reaction tRNA(Ala) + L-alanine + ATP = L-alanyl-tRNA(Ala) + AMP + diphosphate. In terms of biological role, catalyzes the attachment of alanine to tRNA(Ala) in a two-step reaction: alanine is first activated by ATP to form Ala-AMP and then transferred to the acceptor end of tRNA(Ala). Also edits incorrectly charged Ser-tRNA(Ala) and Gly-tRNA(Ala) via its editing domain. The polypeptide is Alanine--tRNA ligase (Lactobacillus helveticus (strain DPC 4571)).